Here is a 167-residue protein sequence, read N- to C-terminus: Ribosome maturation factor RimM (167 aa).

A PRC barrel domain is found at 94–165 (ENEFYYSDII…KIIITPMEGL (72 aa)).

This sequence belongs to the RimM family. Binds ribosomal protein uS19.

Its subcellular location is the cytoplasm. Functionally, an accessory protein needed during the final step in the assembly of 30S ribosomal subunit, possibly for assembly of the head region. Essential for efficient processing of 16S rRNA. May be needed both before and after RbfA during the maturation of 16S rRNA. It has affinity for free ribosomal 30S subunits but not for 70S ribosomes. In Staphylococcus aureus (strain MRSA252), this protein is Ribosome maturation factor RimM.